The primary structure comprises 627 residues: MSLDISKYPILALANTPDELRSLPKESLPALCDELRTYLLNSVSKTSGHLASGLGVVELTVALHYVYNTPFDQLIWDVGHQAYPHKILTGRREQLSTIRQKDGLHPFPWRGESEYDVLSVGHSSTSISAALGLAICAEKEQENRKIVSVIGDGAITAGMAFEALNHAGDIHPDMLVVLNDNEMSISENVGALNNQLARVLSGSLYTSIREGGKKVLSGTPTIKELLKRTEEHLKGMVVPGTMFEELGFNYIGPVDGHDVNELVRTLKNMRNLKGPQFLHIMTKKGKGYEPAEKDPISYHGVPKFDPSNTSLPKSSGGKPTFSAVFGDFLCDMAKEDSKLMAITPAMREGSGMVRFSKEYPNQYFDAAIAEQHAVTLASGMAIAGYNPIVAIYSTFLQRGYDQLIHDVAIMDLPVMFAIDRAGLVGADGQTHQGAFDISFMRCIPNMVIMTPSDENECRQMLYTGHKHTGPSAVRYPRGSATGIQVNNEMQALEIGKGRLLRETKVTEKGERVAILNFGTFLANSLEAAEKLDATVADMRFAKPLDEALICELVTNHDVLVTIEENAISGGAGSGVIEFLMKNRLVKPVLQLGLPDEFIAQGTQEEMHTELKLDANGIEQQIRDYLDL.

Thiamine diphosphate contacts are provided by residues histidine 80 and 121–123 (GHS). Aspartate 152 provides a ligand contact to Mg(2+). Residues 153–154 (GA), asparagine 181, tyrosine 288, and glutamate 370 each bind thiamine diphosphate. A Mg(2+)-binding site is contributed by asparagine 181.

This sequence belongs to the transketolase family. DXPS subfamily. In terms of assembly, homodimer. Mg(2+) is required as a cofactor. It depends on thiamine diphosphate as a cofactor.

The enzyme catalyses D-glyceraldehyde 3-phosphate + pyruvate + H(+) = 1-deoxy-D-xylulose 5-phosphate + CO2. Its pathway is metabolic intermediate biosynthesis; 1-deoxy-D-xylulose 5-phosphate biosynthesis; 1-deoxy-D-xylulose 5-phosphate from D-glyceraldehyde 3-phosphate and pyruvate: step 1/1. Its function is as follows. Catalyzes the acyloin condensation reaction between C atoms 2 and 3 of pyruvate and glyceraldehyde 3-phosphate to yield 1-deoxy-D-xylulose-5-phosphate (DXP). The polypeptide is 1-deoxy-D-xylulose-5-phosphate synthase (Aliivibrio fischeri (strain ATCC 700601 / ES114) (Vibrio fischeri)).